The primary structure comprises 563 residues: Delta-1-pyrroline-5-carboxylate dehydrogenase, mitochondrial (563 aa).

The transit peptide at 1–24 directs the protein to the mitochondrion; sequence MLLRSAALCRALLARRGRAAGLCR. Ser44 is subject to Phosphoserine. Lys52 is modified (N6-acetyllysine). An N6-acetyllysine; alternate mark is found at Lys93, Lys99, Lys114, Lys130, and Lys175. Residues Lys93, Lys99, Lys114, Lys130, and Lys175 each carry the N6-succinyllysine; alternate modification. NAD(+)-binding positions include Ser208, Lys233, and 286-290; that span reads GSVPT. Catalysis depends on Glu314, which acts as the Proton acceptor. N6-acetyllysine is present on Lys318. Residue Lys347 is modified to N6-succinyllysine. Cys348 (nucleophile) is an active-site residue. Residues Lys365 and Lys376 each carry the N6-acetyllysine modification. Position 395 is an N6-succinyllysine (Lys395). Glu447 provides a ligand contact to NAD(+). Lys509 is modified (N6-acetyllysine; alternate). Lys509 carries the post-translational modification N6-succinyllysine; alternate. Ser513 provides a ligand contact to substrate. Lys531 is subject to N6-acetyllysine.

It belongs to the aldehyde dehydrogenase family. In terms of assembly, homodimer.

It localises to the mitochondrion matrix. The enzyme catalyses L-glutamate 5-semialdehyde + NAD(+) + H2O = L-glutamate + NADH + 2 H(+). The protein operates within amino-acid degradation; L-proline degradation into L-glutamate; L-glutamate from L-proline: step 2/2. In terms of biological role, irreversible conversion of delta-1-pyrroline-5-carboxylate (P5C), derived either from proline or ornithine, to glutamate. This is a necessary step in the pathway interconnecting the urea and tricarboxylic acid cycles. The preferred substrate is glutamic gamma-semialdehyde, other substrates include succinic, glutaric and adipic semialdehydes. The polypeptide is Delta-1-pyrroline-5-carboxylate dehydrogenase, mitochondrial (ALDH4A1) (Bos taurus (Bovine)).